Consider the following 209-residue polypeptide: MGKFQVISHPLIQHKLSILRREDTSTKDFRELVNEIAMLMGYEVSRDLPLEEVEIQTPITKTVQKQLSGKKLAIVPILRAGIGMVDGFLSLVPAAKVGHIGMYRDEETLEPVEYLVKLPEDIDQRQIFVVDPMLATGGSAILAVDSLKKRGAANIKFVCLVAAPEGVKKLQDAHPDIDIYTASLDEKLNENGYIVPGLGDAGDRLFGTK.

Residues R79, R104, and 131-139 (DPMLATGGS) each bind 5-phospho-alpha-D-ribose 1-diphosphate. Uracil is bound by residues I194 and 199 to 201 (GDA). Residue D200 coordinates 5-phospho-alpha-D-ribose 1-diphosphate.

Belongs to the UPRTase family. Requires Mg(2+) as cofactor.

It catalyses the reaction UMP + diphosphate = 5-phospho-alpha-D-ribose 1-diphosphate + uracil. The protein operates within pyrimidine metabolism; UMP biosynthesis via salvage pathway; UMP from uracil: step 1/1. Its activity is regulated as follows. Allosterically activated by GTP. Its function is as follows. Catalyzes the conversion of uracil and 5-phospho-alpha-D-ribose 1-diphosphate (PRPP) to UMP and diphosphate. The chain is Uracil phosphoribosyltransferase from Streptococcus salivarius.